Reading from the N-terminus, the 122-residue chain is Large ribosomal subunit protein uL14 (122 aa).

Belongs to the universal ribosomal protein uL14 family. In terms of assembly, part of the 50S ribosomal subunit. Forms a cluster with proteins L3 and L19. In the 70S ribosome, L14 and L19 interact and together make contacts with the 16S rRNA in bridges B5 and B8.

Binds to 23S rRNA. Forms part of two intersubunit bridges in the 70S ribosome. In Enterococcus faecalis (strain ATCC 700802 / V583), this protein is Large ribosomal subunit protein uL14.